The primary structure comprises 531 residues: Acyl-CoA ligase azaF (531 aa).

188–199 (RLFSSGTTGLPK) is an AMP binding site. The tract at residues 449–525 (EVEGVLRNHP…DAIPRNASGK (77 aa)) is AMP-binding.

Belongs to the ATP-dependent AMP-binding enzyme family.

The protein operates within secondary metabolite biosynthesis. In terms of biological role, acyl-CoA ligase; part of the gene cluster that mediates the biosynthesis of azaphilones, a class of fungal metabolites characterized by a highly oxygenated pyrano-quinone bicyclic core and exhibiting a broad range of bioactivities. In the first step, the non-reducing polyketide synthase azaA forms the hexaketide precursor from successive condensations of five malonyl-CoA units, presumably with a simple acetyl-CoA starter unit. The reactive polyketide chain then undergoes a PT-mediated C2-C7 cyclization to afford the aromatic ring and is eventually released as an aldehyde through the R-domain. The putative ketoreductase azaE is proposed to catalyze the reduction of the terminal ketone resulting in the early culture product FK17-P2a. The monooxygenase azaH was demonstrated to be the only enzyme required to convert FK17-P2a to azanigerone E. AzaH first hydroxylates the benzaldehyde intermediate FK17-P2a at C4, which triggers the formation of the pyran-ring to afford azanigerone E. In parallel, the 2,4-dimethylhexanoyl chain is synthesized by the HR-PKS azaB and is proposed to be transferred to the C4-hydroxyl of azanigerone E by the acyltransferase azaD directly from the ACP domain of azaB. Alternatively, the 2,4-dimethyl-hexanoyl chain may be offloaded from the HR-PKS as a carboxylic acid and converted to an acyl-CoA by azaF. The resulting acyl-CoA molecule could then be taken up as a substrate by AzaD to form azanigerone B. To yield the carboxylic acid substituent in azanigerone A, the hydroxypropyl side chain of azanigerone B would need to undergo a C-C oxidative cleavage catalyzed by cytochrome P450 AzaI. AzaI is proposed to act on a vicinal diol that leads to a C-C bond scission either through an alkoxyradical intermediate or a peroxy complex. In the biosynthesis of azanigerone A, azanigerone B first undergoes hydroxylation at C10, possibly catalyzed by one of the two FAD-dependent monooxygenases encoded in the cluster, azaG or azaL, resulting in the vicinal diol azanigerone C. Oxidative cleavage of azanigerone C by azaI would yield the corresponding aldehyde derivative of azanigerone A. Finally, the dehydrogenase azaJ is proposed to convert the aldehyde functional group into the carboxylic acid, completing the conversion from azanigerone B to azanigerone A. Alternatively, the oxidation of aldehyde to carboxylic acid may be catalyzed by the same P450 enzyme azaI via consecutive oxidation or by endogenous alcohol dehydrogenase. In Aspergillus niger (strain ATCC 1015 / CBS 113.46 / FGSC A1144 / LSHB Ac4 / NCTC 3858a / NRRL 328 / USDA 3528.7), this protein is Acyl-CoA ligase azaF.